We begin with the raw amino-acid sequence, 586 residues long: uncharacterized protein (586 aa).

Disordered regions lie at residues 17–64 (VRRT…ETEE) and 80–123 (HSCS…GGAN). Positions 28-37 (PSTSGSIAWT) are enriched in polar residues. 2 stretches are compositionally biased toward low complexity: residues 38-52 (SSESGSAHSSRVSSS) and 80-91 (HSCSAATTSQQS). Over residues 94-110 (QSKEHRIGGIKKEEKPI) the composition is skewed to basic and acidic residues. The span at 112–123 (MGGGSSENGGAN) shows a compositional bias: gly residues. A run of 12 helical transmembrane segments spans residues 151-171 (WVILVIFMFLSGSNGAQWIQY), 191-211 (WTSMIYMLTYILFFIPAAWLL), 218-238 (LSVLLGALGNCVGAWIKLLST), 243-263 (FWVTFVGQTIVGASQMFTLGI), 283-303 (LGVFGNQLGIAVGFVLPPLIV), 317-337 (TLFLGSAVLNTSILALVICFF), 375-395 (FVILFITYGINTGVFYAISTL), 413-433 (YVGLLIVVAGMAGSVVGGFIL), 441-461 (LTTIMIYLFSFVGMLSFTLTI), 466-486 (MVLVFINAALLGFFMTGYLPI), 513-533 (IFGIALTWLMGIVMHGFGTFT), and 536-556 (IIMSSCLVVGTILTCFIREDL).

It belongs to the major facilitator superfamily. Feline leukemia virus subgroup C receptor (TC 2.A.1.28.1) family.

The protein resides in the membrane. This is an uncharacterized protein from Caenorhabditis elegans.